The primary structure comprises 429 residues: C4-dicarboxylate transport protein (429 aa).

The next 8 helical transmembrane spans lie at 9 to 29 (VLYV…HYYP), 45 to 65 (LIKM…IAGM), 79 to 99 (LLYF…ATHI), 149 to 169 (GEIL…AHLG), 185 to 205 (VLFG…FGAM), 223 to 243 (LIGT…GTIA), 308 to 328 (IYMT…LTWM), and 356 to 376 (AATL…ILGI).

This sequence belongs to the dicarboxylate/amino acid:cation symporter (DAACS) (TC 2.A.23) family.

Its subcellular location is the cell inner membrane. In terms of biological role, responsible for the transport of dicarboxylates such as succinate, fumarate, and malate from the periplasm across the membrane. This is C4-dicarboxylate transport protein from Burkholderia lata (strain ATCC 17760 / DSM 23089 / LMG 22485 / NCIMB 9086 / R18194 / 383).